A 313-amino-acid chain; its full sequence is Homoserine O-acetyltransferase (313 aa).

The active-site Acyl-thioester intermediate is Cys144. Lys165 and Ser194 together coordinate substrate. The active-site Proton acceptor is His236. Glu238 is a catalytic residue. Arg250 is a binding site for substrate.

The protein belongs to the MetA family.

The protein resides in the cytoplasm. It catalyses the reaction L-homoserine + acetyl-CoA = O-acetyl-L-homoserine + CoA. The protein operates within amino-acid biosynthesis; L-methionine biosynthesis via de novo pathway; O-acetyl-L-homoserine from L-homoserine: step 1/1. Transfers an acetyl group from acetyl-CoA to L-homoserine, forming acetyl-L-homoserine. This chain is Homoserine O-acetyltransferase, found in Jannaschia sp. (strain CCS1).